Here is a 128-residue protein sequence, read N- to C-terminus: NADH-ubiquinone oxidoreductase chain 3 (128 aa).

3 helical membrane passes run 3-23 (TIYT…NYLI), 52-72 (VAFI…SSIL), and 84-104 (YGLS…VYEI).

Belongs to the complex I subunit 3 family.

Its subcellular location is the mitochondrion membrane. It carries out the reaction a ubiquinone + NADH + 5 H(+)(in) = a ubiquinol + NAD(+) + 4 H(+)(out). In terms of biological role, core subunit of the mitochondrial membrane respiratory chain NADH dehydrogenase (Complex I) that is believed to belong to the minimal assembly required for catalysis. Complex I functions in the transfer of electrons from NADH to the respiratory chain. The immediate electron acceptor for the enzyme is believed to be ubiquinone. The protein is NADH-ubiquinone oxidoreductase chain 3 (ND3) of Debaryomyces hansenii (strain ATCC 36239 / CBS 767 / BCRC 21394 / JCM 1990 / NBRC 0083 / IGC 2968) (Yeast).